Here is a 261-residue protein sequence, read N- to C-terminus: uncharacterized protein (261 aa).

Transmembrane regions (helical) follow at residues 38 to 58 (FIYLILGGFGFYQPSNLITLL), 134 to 154 (YTLMVSLVAIFQCLISLLALI), 163 to 183 (ILINLSLTLNFFLLLFNTYVL), 195 to 215 (YMGLIVSYIISLLDFSALFFL), and 219 to 239 (HKSVLSVISSIFSFFLMCLKV).

The protein localises to the membrane. This is an uncharacterized protein from Dictyostelium discoideum (Social amoeba).